Here is a 142-residue protein sequence, read N- to C-terminus: Large ribosomal subunit protein uL11 (142 aa).

Belongs to the universal ribosomal protein uL11 family. Part of the ribosomal stalk of the 50S ribosomal subunit. Interacts with L10 and the large rRNA to form the base of the stalk. L10 forms an elongated spine to which L12 dimers bind in a sequential fashion forming a multimeric L10(L12)X complex. One or more lysine residues are methylated.

Its function is as follows. Forms part of the ribosomal stalk which helps the ribosome interact with GTP-bound translation factors. This is Large ribosomal subunit protein uL11 from Buchnera aphidicola subsp. Schizaphis graminum (strain Sg).